Consider the following 438-residue polypeptide: UDP-N-acetylmuramoylalanine--D-glutamate ligase (438 aa).

112-118 (GSNGKST) is an ATP binding site.

The protein belongs to the MurCDEF family.

Its subcellular location is the cytoplasm. The enzyme catalyses UDP-N-acetyl-alpha-D-muramoyl-L-alanine + D-glutamate + ATP = UDP-N-acetyl-alpha-D-muramoyl-L-alanyl-D-glutamate + ADP + phosphate + H(+). It participates in cell wall biogenesis; peptidoglycan biosynthesis. Functionally, cell wall formation. Catalyzes the addition of glutamate to the nucleotide precursor UDP-N-acetylmuramoyl-L-alanine (UMA). The protein is UDP-N-acetylmuramoylalanine--D-glutamate ligase of Salmonella typhimurium (strain LT2 / SGSC1412 / ATCC 700720).